The primary structure comprises 345 residues: Probable dual-specificity RNA methyltransferase RlmN (345 aa).

Residue Glu-90 is the Proton acceptor of the active site. In terms of domain architecture, Radical SAM core spans 96-326; sequence YDYGNSICIS…STIRKEMGAD (231 aa). A disulfide bridge connects residues Cys-103 and Cys-331. Residues Cys-110, Cys-114, and Cys-117 each contribute to the [4Fe-4S] cluster site. S-adenosyl-L-methionine contacts are provided by residues 157 to 158, Ser-189, 212 to 214, and Asn-288; these read GE and SLH. Residue Cys-331 is the S-methylcysteine intermediate of the active site.

The protein belongs to the radical SAM superfamily. RlmN family. It depends on [4Fe-4S] cluster as a cofactor.

It localises to the cytoplasm. The catalysed reaction is adenosine(2503) in 23S rRNA + 2 reduced [2Fe-2S]-[ferredoxin] + 2 S-adenosyl-L-methionine = 2-methyladenosine(2503) in 23S rRNA + 5'-deoxyadenosine + L-methionine + 2 oxidized [2Fe-2S]-[ferredoxin] + S-adenosyl-L-homocysteine. The enzyme catalyses adenosine(37) in tRNA + 2 reduced [2Fe-2S]-[ferredoxin] + 2 S-adenosyl-L-methionine = 2-methyladenosine(37) in tRNA + 5'-deoxyadenosine + L-methionine + 2 oxidized [2Fe-2S]-[ferredoxin] + S-adenosyl-L-homocysteine. Functionally, specifically methylates position 2 of adenine 2503 in 23S rRNA and position 2 of adenine 37 in tRNAs. This is Probable dual-specificity RNA methyltransferase RlmN from Clostridium acetobutylicum (strain ATCC 824 / DSM 792 / JCM 1419 / IAM 19013 / LMG 5710 / NBRC 13948 / NRRL B-527 / VKM B-1787 / 2291 / W).